The following is a 383-amino-acid chain: Non-structural maintenance of chromosomes element 4 homolog B (383 aa).

Residues 1–22 are compositionally biased toward basic and acidic residues; it reads MRNSVKWETELTGDRSRRREAD. Disordered regions lie at residues 1-59, 198-231, and 355-383; these read MRNS…EQGI, MKQRKSRVGNRKRTKPGAGVKPEEVDDTEAEKKS, and QGSVIQEETVVEDSSNMEGDNEDSKNGGL. Residues 201 to 212 are compositionally biased toward basic residues; sequence RKSRVGNRKRTK. Over residues 355 to 372 the composition is skewed to polar residues; the sequence is QGSVIQEETVVEDSSNME.

The protein belongs to the NSE4 family. Interacts with SMC5, SMC6A or SMC6B. The SMC5-SMC6 complex is composed of the SMC5 and SMC6 heterodimer attached via their hinge domain and from the non-SMC subunit NSE4A or NSE4B. As to expression, not expressed in seedlings, rosette leaves and floral buds.

It localises to the nucleus. Functionally, component of the SMC5-SMC6 complex, that promotes sister chromatid alignment after DNA damage and facilitates double-stranded DNA breaks (DSBs) repair via homologous recombination between sister chromatids. The sequence is that of Non-structural maintenance of chromosomes element 4 homolog B (NSE4B) from Arabidopsis thaliana (Mouse-ear cress).